The sequence spans 491 residues: Protein nucleotidyltransferase YdiU (491 aa).

Positions 88, 90, 91, 111, 123, 124, 174, and 181 each coordinate ATP. Catalysis depends on Asp-250, which acts as the Proton acceptor. Residues Asn-251 and Asp-260 each coordinate Mg(2+). Asp-260 is a binding site for ATP.

The protein belongs to the SELO family. Requires Mg(2+) as cofactor. The cofactor is Mn(2+).

The enzyme catalyses L-seryl-[protein] + ATP = 3-O-(5'-adenylyl)-L-seryl-[protein] + diphosphate. It carries out the reaction L-threonyl-[protein] + ATP = 3-O-(5'-adenylyl)-L-threonyl-[protein] + diphosphate. It catalyses the reaction L-tyrosyl-[protein] + ATP = O-(5'-adenylyl)-L-tyrosyl-[protein] + diphosphate. The catalysed reaction is L-histidyl-[protein] + UTP = N(tele)-(5'-uridylyl)-L-histidyl-[protein] + diphosphate. The enzyme catalyses L-seryl-[protein] + UTP = O-(5'-uridylyl)-L-seryl-[protein] + diphosphate. It carries out the reaction L-tyrosyl-[protein] + UTP = O-(5'-uridylyl)-L-tyrosyl-[protein] + diphosphate. In terms of biological role, nucleotidyltransferase involved in the post-translational modification of proteins. It can catalyze the addition of adenosine monophosphate (AMP) or uridine monophosphate (UMP) to a protein, resulting in modifications known as AMPylation and UMPylation. This is Protein nucleotidyltransferase YdiU from Rhodopseudomonas palustris (strain BisB18).